The sequence spans 272 residues: Methylsterol monooxygenase 2-1 (272 aa).

The next 3 membrane-spanning stretches (helical) occupy residues 24-44, 72-94, and 107-127; these read IGSF…YIFL, LLLY…FRFM, and VVSA…YWGH. One can recognise a Fatty acid hydroxylase domain in the interval 113–259; it reads LFYFIIEDFV…FVYMDWIFGT (147 aa). The Histidine box-1 motif lies at 127-131; the sequence is HRILH. The short motif at 140–144 is the Histidine box-2 element; it reads HSVHH. The next 2 helical transmembrane spans lie at 162 to 182 and 209 to 229; these read ILFL…HLIT and NFLP…AYSA. A Histidine box-3 motif is present at residues 231 to 237; the sequence is FHDYHHR.

This sequence belongs to the sterol desaturase family. Requires Fe cation as cofactor. Strongly expressed in leaves, flowers, siliques and developing seeds.

The protein localises to the endoplasmic reticulum membrane. It catalyses the reaction 4,4-dimethyl-5alpha-cholest-7-en-3beta-ol + 6 Fe(II)-[cytochrome b5] + 3 O2 + 5 H(+) = 4alpha-carboxy-4beta-methyl-5alpha-cholest-7-ene-3beta-ol + 6 Fe(III)-[cytochrome b5] + 4 H2O. It carries out the reaction 24-methylidenelophenol + 6 Fe(II)-[cytochrome b5] + 3 O2 + 5 H(+) = 4alpha-carboxy-ergosta-7,24(24(1))-dien-3beta-ol + 6 Fe(III)-[cytochrome b5] + 4 H2O. In terms of biological role, non-heme iron oxygenase involved in sterols biosynthesis by catalyzing the removal of the second methyl group at the C-4 position. 24-ethylidenelophenol and 24-ethyllophenol are the preferred substrates. Together with SMO2-2, required during embryogenesis, probably by maintaining sterols and auxin homeostasis. This Arabidopsis thaliana (Mouse-ear cress) protein is Methylsterol monooxygenase 2-1.